A 210-amino-acid chain; its full sequence is Redox-sensing transcriptional repressor Rex (210 aa).

A DNA-binding region (H-T-H motif) is located at residues 17–56; it reads KYHRYLNELMKNDVDRISSKELGEKIGFTASQIRQDLNCF. 91-96 lines the NAD(+) pocket; sequence GAGNIG.

Belongs to the transcriptional regulatory Rex family. In terms of assembly, homodimer.

The protein resides in the cytoplasm. In terms of biological role, modulates transcription in response to changes in cellular NADH/NAD(+) redox state. The polypeptide is Redox-sensing transcriptional repressor Rex (Clostridium botulinum (strain Alaska E43 / Type E3)).